The chain runs to 427 residues: Trigger factor (427 aa).

Residues 163–248 (GDTVVIDFVG…IHEVKAKEVP (86 aa)) enclose the PPIase FKBP-type domain.

This sequence belongs to the FKBP-type PPIase family. Tig subfamily.

It is found in the cytoplasm. The catalysed reaction is [protein]-peptidylproline (omega=180) = [protein]-peptidylproline (omega=0). In terms of biological role, involved in protein export. Acts as a chaperone by maintaining the newly synthesized protein in an open conformation. Functions as a peptidyl-prolyl cis-trans isomerase. The sequence is that of Trigger factor from Streptococcus pneumoniae (strain CGSP14).